The sequence spans 245 residues: Tetraspanin-16 (245 aa).

Over 1 to 13 the chain is Cytoplasmic; that stretch reads MAEIHTPYSSLKK. A helical membrane pass occupies residues 14–34; that stretch reads LLSLLNGFVAVSGIILVGLGI. Residues 35–37 are Extracellular-facing; sequence GGK. A helical transmembrane segment spans residues 38-58; the sequence is CGGASLTNVLGLSSAYLLHVG. Residue asparagine 59 is a topological domain, cytoplasmic. A helical transmembrane segment spans residues 60 to 80; sequence LCLVMGCITVLLGCAGWYGAT. The Extracellular segment spans residues 81-94; it reads KESRGTLLFCILSM. The chain crosses the membrane as a helical span at residues 95 to 115; it reads VIVLIMEVTAATVVLLFFPIV. The Cytoplasmic segment spans residues 116-245; it reads GDVALEHTFV…VAQAGLELLA (130 aa).

Belongs to the tetraspanin (TM4SF) family. As to expression, broadly expressed in most human tissues and cell lines including neural and bone marrow derived tissues.

It localises to the membrane. The protein is Tetraspanin-16 (TSPAN16) of Homo sapiens (Human).